A 332-amino-acid polypeptide reads, in one-letter code: MHLSLLALFLFWISGCFTAQDPVTGPEEVSGYEQGSLTVWCRYGSWWKDYSKYWCRGPKRSSCEIRVETDASERLVKENHVSIRDDQTNFTFTVTMEDLRMSDAGIYWCGITKAGYDHMFKVHVSINPVPTTPTTTSTTTIFTVTTTVKETSTLSTQTSHYSDNRYDSGGVGDGNGFLDLSVLLPVISAALLLLLLVVSLIAWRMVRRQKKAAGPPSGQADSVTHILCPPKPHVQPLEDDLCYANLSLQQPRTSPLKKGSSMSSSGKDHQEEVEYVTMAPFPREEISYAALSLASLGQEPTYSNTACLVTHGPRTNLGEETTEYSSIRRPMP.

Positions 1 to 18 (MHLSLLALFLFWISGCFT) are cleaved as a signal peptide. Residues 19–181 (AQDPVTGPEE…GDGNGFLDLS (163 aa)) are Extracellular-facing. In terms of domain architecture, Ig-like V-type spans 22–125 (PVTGPEEVSG…YDHMFKVHVS (104 aa)). 2 disulfides stabilise this stretch: Cys41–Cys109 and Cys55–Cys63. An N-linked (GlcNAc...) asparagine glycan is attached at Asn89. Residues 182 to 202 (VLLPVISAALLLLLLVVSLIA) traverse the membrane as a helical segment. Residues 203–332 (WRMVRRQKKA…EYSSIRRPMP (130 aa)) are Cytoplasmic-facing. 2 disordered regions span residues 251 to 270 (PRTSPLKKGSSMSSSGKDHQ) and 313 to 332 (PRTNLGEETTEYSSIRRPMP).

Belongs to the CD300 family. Interacts with PTPN6/SHP-1 in a tyrosine phosphorylation dependent manner. Interacts with IL4R. Phosphorylated on tyrosine.

It is found in the cell membrane. Acts as an inhibitory receptor for myeloid cells and mast cells. Positively regulates the phagocytosis of apoptotic cells (efferocytosis) via phosphatidylserine (PS) recognition; recognizes and binds PS as a ligand which is expressed on the surface of apoptotic cells. Plays an important role in the maintenance of immune homeostasis, by promoting macrophage-mediated efferocytosis and by inhibiting dendritic cell-mediated efferocytosis. Negatively regulates Fc epsilon receptor-dependent mast cell activation and allergic responses via binding to ceramide and sphingomyelin which act as ligands. May act as a coreceptor for interleukin 4 (IL-4). Associates with and regulates IL-4 receptor alpha-mediated responses by augmenting IL-4- and IL-13-induced signaling. Negatively regulates the Toll-like receptor (TLR) signaling mediated by MYD88 and TRIF through activation of PTPN6/SHP-1 and PTPN11/SHP-2. Inhibits osteoclast formation. Induces macrophage cell death upon engagement. The chain is CMRF35-like molecule 1 (Cd300lf) from Rattus norvegicus (Rat).